The sequence spans 111 residues: Protein YibV (111 aa).

This chain is Protein YibV (yibV), found in Escherichia coli O157:H7.